We begin with the raw amino-acid sequence, 270 residues long: Protein-ADP-ribose hydrolase (270 aa).

The Macro domain maps to 73–267 (VSVKDCQKTN…LYDTYLQKEN (195 aa)). Positions 92, 93, and 106 each coordinate ADP-D-ribose. Cys112, His117, and Cys119 together coordinate Zn(2+). Residues Cys119, Ile120, Asp121, Ser212, Thr213, Gly214, Glu215, and Phe216 each contribute to the ADP-D-ribose site.

This sequence belongs to the MacroD-type family. Zn-Macro subfamily. The cofactor is Zn(2+).

The catalysed reaction is 4-O-(ADP-D-ribosyl)-L-aspartyl-[protein] + H2O = L-aspartyl-[protein] + ADP-D-ribose + H(+). Its function is as follows. ADP-ribosylhydrolase that specifically reverses the SirTM-mediated mono-ADP-ribosylation at an asparatate residue of GcvH-L, by releasing ADP-ribose from the target protein. May play a role in the regulation of the response to host-induced oxidative stress. The protein is Protein-ADP-ribose hydrolase of Streptococcus pyogenes serotype M6 (strain ATCC BAA-946 / MGAS10394).